The sequence spans 291 residues: 3-hydroxy-5-phosphonooxypentane-2,4-dione thiolase (291 aa).

Lysine 203 acts as the Schiff-base intermediate with substrate in catalysis.

Belongs to the DeoC/FbaB aldolase family. As to quaternary structure, homodecamer.

Its subcellular location is the cytoplasm. The catalysed reaction is dihydroxyacetone phosphate + acetyl-CoA = 3-hydroxy-2,4-dioxopentyl phosphate + CoA. Functionally, involved in the degradation of phospho-AI-2, thereby terminating induction of the lsr operon and closing the AI-2 signaling cycle. Catalyzes the transfer of an acetyl moiety from 3-hydroxy-5-phosphonooxypentane-2,4-dione to CoA to form glycerone phosphate and acetyl-CoA. In Salmonella typhimurium (strain LT2 / SGSC1412 / ATCC 700720), this protein is 3-hydroxy-5-phosphonooxypentane-2,4-dione thiolase.